A 208-amino-acid chain; its full sequence is Histone H1.3 (208 aa).

At serine 2 the chain carries N-acetylserine. Positions 37-113 constitute an H15 domain; that stretch reads AHPPYINMVT…GASGRFRVTE (77 aa). Positions 113–208 are disordered; it reads EKKAAAAKKP…PAKKAVAPKT (96 aa). 2 stretches are compositionally biased toward basic residues: residues 148-158 and 165-191; these read KAKKTTATKTK and KKVK…KSAP. Residues 192–208 are compositionally biased toward low complexity; that stretch reads KKAAAAKPAKKAVAPKT.

The protein belongs to the histone H1/H5 family.

The protein resides in the nucleus. It localises to the chromosome. Histones H1 are necessary for the condensation of nucleosome chains into higher-order structures. In Caenorhabditis elegans, this protein is Histone H1.3 (hil-3).